The primary structure comprises 280 residues: Hematopoietically-expressed homeobox protein HHEX homolog (280 aa).

Disordered regions lie at residues 1-35 and 221-280; these read MSTLQYPGPPPPSSMNLHNPHMNHHHGLVGPGLAP and RRVK…EKEA. A DNA-binding region (homeobox) is located at residues 165-224; the sequence is RKGGQVRFSNDQTMELEKKFESQKYLSPPERKKLAKLLQLSERQVKTWFQNRRAKWRRVK. A compositionally biased stretch (basic and acidic residues) spans 232 to 252; it reads GEGDENSHEKPRDLDRDDFSR.

Its subcellular location is the nucleus. Transcription factor that may play a central role in activating or maintaining gene expression in the vegetal pole. Part of a gene regulatory circuit with Erg and Tgif that operates early in mesoderm development. The sequence is that of Hematopoietically-expressed homeobox protein HHEX homolog from Patiria miniata (Bat star).